The primary structure comprises 1317 residues: DNA-directed RNA polymerase subunit beta' (1317 aa).

The Zn(2+) site is built by Cys214, Cys286, Cys293, and Cys296. The interval 1279-1317 (RAYAGTQLSQDDEEFEETYDTDEDDFDMDDDDDFGDDED) is disordered. Acidic residues predominate over residues 1288-1317 (QDDEEFEETYDTDEDDFDMDDDDDFGDDED).

Belongs to the RNA polymerase beta' chain family. RpoC2 subfamily. As to quaternary structure, in cyanobacteria the RNAP catalytic core is composed of 2 alpha, 1 beta, 1 beta', 1 gamma and 1 omega subunit. When a sigma factor is associated with the core the holoenzyme is formed, which can initiate transcription. Zn(2+) serves as cofactor.

The catalysed reaction is RNA(n) + a ribonucleoside 5'-triphosphate = RNA(n+1) + diphosphate. DNA-dependent RNA polymerase catalyzes the transcription of DNA into RNA using the four ribonucleoside triphosphates as substrates. The sequence is that of DNA-directed RNA polymerase subunit beta' from Synechocystis sp. (strain ATCC 27184 / PCC 6803 / Kazusa).